The following is a 134-amino-acid chain: Glycine cleavage system H protein (134 aa).

A Lipoyl-binding domain is found at 24–106 (TVRVGITDYA…YGAGWLLDIQ (83 aa)). Lysine 65 carries the post-translational modification N6-lipoyllysine.

Belongs to the GcvH family. The glycine cleavage system is composed of four proteins: P, T, L and H. (R)-lipoate is required as a cofactor.

In terms of biological role, the glycine cleavage system catalyzes the degradation of glycine. The H protein shuttles the methylamine group of glycine from the P protein to the T protein. This Mycobacterium bovis (strain ATCC BAA-935 / AF2122/97) protein is Glycine cleavage system H protein.